A 468-amino-acid polypeptide reads, in one-letter code: MSKTLPKDFIFGGATAAYQAEGATHADGKGPVAWDKYLEDNYWYTAEPASDFYHQYPVDLKLAEEFGVNGIRISIAWSRIFPKGYGAVNPKGLAFYHNLFAECHKRHVEPFVTLHHFDTPEALHSNGDFLNRENIEHFVNYAEFCFKEFPEVNYWTTFNEIGPIGDGQYLVGKFPPGIQYDLAKVFQSHHNMMVAHSKAVKLFKDGGYSGEIGVVHALPTKYPYDPNNPADIRAAELEDIIHNKFILDATYLGKYSEKTMEGVNHILAVNGGQLDLREEDFAALEAAKDLNDFLGINYYMSDWMRAFDGETEITHNAKGEKGSSKYQIKGVGRREAPVNVPKTDWDWIIYPQGLYDQIMRVKQDYPNYKKIYITENGLGYKDEFVNHTVYDDARIDYVKKHLEVLSDAIADGANVKGYFIWSLMDVFSWSNGYEKRYGLFYVDFDTQERYPKKSAYWYKKLAETQIID.

Q19, H116, N159, E160, and N297 together coordinate D-galactose 6-phosphate. The active-site Proton donor is E160. The Nucleophile role is filled by E375. D-galactose 6-phosphate is bound by residues S428, W429, K435, and Y437.

It belongs to the glycosyl hydrolase 1 family.

It catalyses the reaction a 6-phospho-beta-D-galactoside + H2O = D-galactose 6-phosphate + an alcohol. Its pathway is carbohydrate metabolism; lactose degradation; D-galactose 6-phosphate and beta-D-glucose from lactose 6-phosphate: step 1/1. The polypeptide is 6-phospho-beta-galactosidase (Streptococcus mutans serotype c (strain ATCC 700610 / UA159)).